The sequence spans 103 residues: Putative truncated guanine nucleotide exchange factor YLL017W (103 aa).

The region spanning 26 to 97 is the SH3 domain; sequence QPIDVVECTY…PPSFYTVHSK (72 aa).

The protein is Putative truncated guanine nucleotide exchange factor YLL017W of Saccharomyces cerevisiae (strain ATCC 204508 / S288c) (Baker's yeast).